The primary structure comprises 119 residues: Immunoglobulin heavy variable 3-72 (119 aa).

A signal peptide spans 1 to 19 (MEFGLSWVFLVVILQGVQC). Residues 20 to 44 (EVQLVESGGGLVQPGGSLRLSCAAS) are framework-1. The Ig-like domain maps to 20–119 (EVQLVESGGG…EDTAVYYCAR (100 aa)). Residues Cys-41 and Cys-117 are joined by a disulfide bond. The segment at 45 to 52 (GFTFSDHY) is complementarity-determining-1. The tract at residues 53 to 69 (MDWVRQAPGKGLEWVGR) is framework-2. Residues 70 to 79 (TRNKANSYTT) are complementarity-determining-2. Positions 80 to 117 (EYAASVKGRFTISRDDSKNSLYLQMNSLKTEDTAVYYC) are framework-3. A complementarity-determining-3 region spans residues 118 to 119 (AR).

In terms of assembly, immunoglobulins are composed of two identical heavy chains and two identical light chains; disulfide-linked.

Its subcellular location is the secreted. The protein resides in the cell membrane. In terms of biological role, v region of the variable domain of immunoglobulin heavy chains that participates in the antigen recognition. Immunoglobulins, also known as antibodies, are membrane-bound or secreted glycoproteins produced by B lymphocytes. In the recognition phase of humoral immunity, the membrane-bound immunoglobulins serve as receptors which, upon binding of a specific antigen, trigger the clonal expansion and differentiation of B lymphocytes into immunoglobulins-secreting plasma cells. Secreted immunoglobulins mediate the effector phase of humoral immunity, which results in the elimination of bound antigens. The antigen binding site is formed by the variable domain of one heavy chain, together with that of its associated light chain. Thus, each immunoglobulin has two antigen binding sites with remarkable affinity for a particular antigen. The variable domains are assembled by a process called V-(D)-J rearrangement and can then be subjected to somatic hypermutations which, after exposure to antigen and selection, allow affinity maturation for a particular antigen. The sequence is that of Immunoglobulin heavy variable 3-72 from Homo sapiens (Human).